Consider the following 249-residue polypeptide: 2,3,4,5-tetrahydropyridine-2,6-dicarboxylate N-acetyltransferase (249 aa).

The protein belongs to the transferase hexapeptide repeat family. DapH subfamily.

The catalysed reaction is (S)-2,3,4,5-tetrahydrodipicolinate + acetyl-CoA + H2O = L-2-acetamido-6-oxoheptanedioate + CoA. Its pathway is amino-acid biosynthesis; L-lysine biosynthesis via DAP pathway; LL-2,6-diaminopimelate from (S)-tetrahydrodipicolinate (acetylase route): step 1/3. Catalyzes the transfer of an acetyl group from acetyl-CoA to tetrahydrodipicolinate. The chain is 2,3,4,5-tetrahydropyridine-2,6-dicarboxylate N-acetyltransferase from Fervidobacterium nodosum (strain ATCC 35602 / DSM 5306 / Rt17-B1).